A 217-amino-acid polypeptide reads, in one-letter code: 7-cyano-7-deazaguanine synthase (217 aa).

Residue 7-17 participates in ATP binding; the sequence is LSGGMDSTTLL. Residues cysteine 183, cysteine 191, cysteine 194, and cysteine 197 each coordinate Zn(2+).

The protein belongs to the QueC family. The cofactor is Zn(2+).

It catalyses the reaction 7-carboxy-7-deazaguanine + NH4(+) + ATP = 7-cyano-7-deazaguanine + ADP + phosphate + H2O + H(+). It functions in the pathway purine metabolism; 7-cyano-7-deazaguanine biosynthesis. Catalyzes the ATP-dependent conversion of 7-carboxy-7-deazaguanine (CDG) to 7-cyano-7-deazaguanine (preQ(0)). This Methanoregula boonei (strain DSM 21154 / JCM 14090 / 6A8) protein is 7-cyano-7-deazaguanine synthase.